Reading from the N-terminus, the 491-residue chain is Glutamyl-tRNA(Gln) amidotransferase subunit A (491 aa).

Residues Lys77 and Ser152 each act as charge relay system in the active site. The Acyl-ester intermediate role is filled by Ser176.

Belongs to the amidase family. GatA subfamily. In terms of assembly, heterotrimer of A, B and C subunits.

It carries out the reaction L-glutamyl-tRNA(Gln) + L-glutamine + ATP + H2O = L-glutaminyl-tRNA(Gln) + L-glutamate + ADP + phosphate + H(+). In terms of biological role, allows the formation of correctly charged Gln-tRNA(Gln) through the transamidation of misacylated Glu-tRNA(Gln) in organisms which lack glutaminyl-tRNA synthetase. The reaction takes place in the presence of glutamine and ATP through an activated gamma-phospho-Glu-tRNA(Gln). The sequence is that of Glutamyl-tRNA(Gln) amidotransferase subunit A from Chlamydia trachomatis serovar L2 (strain ATCC VR-902B / DSM 19102 / 434/Bu).